The primary structure comprises 214 residues: Outer-membrane lipoprotein LolB (214 aa).

Residues 1 to 25 (MNNLKRFTESIFSCIALSTLLFLGG) form the signal peptide. Residue Cys-26 is the site of N-palmitoyl cysteine attachment. Cys-26 is lipidated: S-diacylglycerol cysteine.

The protein belongs to the LolB family. In terms of assembly, monomer.

The protein resides in the cell outer membrane. Plays a critical role in the incorporation of lipoproteins in the outer membrane after they are released by the LolA protein. The polypeptide is Outer-membrane lipoprotein LolB (Shewanella putrefaciens (strain CN-32 / ATCC BAA-453)).